Reading from the N-terminus, the 197-residue chain is Holliday junction branch migration complex subunit RuvA (197 aa).

Residues 1–63 (MYDYIKGNLT…EDAHLLYGFH (63 aa)) are domain I. Positions 64–142 (TEDEKAVFLN…DINEVSTDKS (79 aa)) are domain II. Residues 143-147 (KVSTI) are flexible linker. A domain III region spans residues 148–197 (NNNQELEEAVEALLALGYKTNELKKIEKFFEGTTDTAENYIKSALKMLMK).

It belongs to the RuvA family. As to quaternary structure, homotetramer. Forms an RuvA(8)-RuvB(12)-Holliday junction (HJ) complex. HJ DNA is sandwiched between 2 RuvA tetramers; dsDNA enters through RuvA and exits via RuvB. An RuvB hexamer assembles on each DNA strand where it exits the tetramer. Each RuvB hexamer is contacted by two RuvA subunits (via domain III) on 2 adjacent RuvB subunits; this complex drives branch migration. In the full resolvosome a probable DNA-RuvA(4)-RuvB(12)-RuvC(2) complex forms which resolves the HJ.

It localises to the cytoplasm. The RuvA-RuvB-RuvC complex processes Holliday junction (HJ) DNA during genetic recombination and DNA repair, while the RuvA-RuvB complex plays an important role in the rescue of blocked DNA replication forks via replication fork reversal (RFR). RuvA specifically binds to HJ cruciform DNA, conferring on it an open structure. The RuvB hexamer acts as an ATP-dependent pump, pulling dsDNA into and through the RuvAB complex. HJ branch migration allows RuvC to scan DNA until it finds its consensus sequence, where it cleaves and resolves the cruciform DNA. This chain is Holliday junction branch migration complex subunit RuvA, found in Streptococcus mutans serotype c (strain ATCC 700610 / UA159).